The following is a 317-amino-acid chain: Beta-ketoacyl-[acyl-carrier-protein] synthase III (317 aa).

Residues Cys-112 and His-244 contribute to the active site. The ACP-binding stretch occupies residues 245–249 (QANLR). Asn-274 is a catalytic residue.

It belongs to the thiolase-like superfamily. FabH family. As to quaternary structure, homodimer.

Its subcellular location is the cytoplasm. It carries out the reaction malonyl-[ACP] + acetyl-CoA + H(+) = 3-oxobutanoyl-[ACP] + CO2 + CoA. Its pathway is lipid metabolism; fatty acid biosynthesis. In terms of biological role, catalyzes the condensation reaction of fatty acid synthesis by the addition to an acyl acceptor of two carbons from malonyl-ACP. Catalyzes the first condensation reaction which initiates fatty acid synthesis and may therefore play a role in governing the total rate of fatty acid production. Possesses both acetoacetyl-ACP synthase and acetyl transacylase activities. Its substrate specificity determines the biosynthesis of branched-chain and/or straight-chain of fatty acids. The chain is Beta-ketoacyl-[acyl-carrier-protein] synthase III from Shigella dysenteriae serotype 1 (strain Sd197).